The sequence spans 274 residues: 3-methyl-2-oxobutanoate hydroxymethyltransferase (274 aa).

Positions 46 and 85 each coordinate Mg(2+). Residues 46 to 47 (DS), Asp85, and Lys115 contribute to the 3-methyl-2-oxobutanoate site. Glu117 contacts Mg(2+). Residue Glu184 is the Proton acceptor of the active site.

The protein belongs to the PanB family. In terms of assembly, homodecamer; pentamer of dimers. Mg(2+) is required as a cofactor.

The protein resides in the cytoplasm. It carries out the reaction 3-methyl-2-oxobutanoate + (6R)-5,10-methylene-5,6,7,8-tetrahydrofolate + H2O = 2-dehydropantoate + (6S)-5,6,7,8-tetrahydrofolate. It participates in cofactor biosynthesis; coenzyme A biosynthesis. Catalyzes the reversible reaction in which hydroxymethyl group from 5,10-methylenetetrahydrofolate is transferred onto alpha-ketoisovalerate to form ketopantoate. The sequence is that of 3-methyl-2-oxobutanoate hydroxymethyltransferase from Halobacterium salinarum (strain ATCC 29341 / DSM 671 / R1).